We begin with the raw amino-acid sequence, 343 residues long: Malate dehydrogenase, peroxisomal (343 aa).

Residues 8–14 and aspartate 34 each bind NAD(+); that span reads GASGGVG. Substrate is bound by residues arginine 80 and arginine 86. Residues asparagine 93 and 116 to 118 contribute to the NAD(+) site; that span reads ISN. Substrate contacts are provided by asparagine 118 and arginine 152. Histidine 187 (proton acceptor) is an active-site residue. Methionine 237 is an NAD(+) binding site.

It belongs to the LDH/MDH superfamily. MDH type 1 family. As to quaternary structure, homodimer.

The protein localises to the peroxisome. It carries out the reaction (S)-malate + NAD(+) = oxaloacetate + NADH + H(+). This is Malate dehydrogenase, peroxisomal (MDH3) from Saccharomyces cerevisiae (strain ATCC 204508 / S288c) (Baker's yeast).